The following is a 120-amino-acid chain: Large ribosomal subunit protein uL18 (120 aa).

The segment at 1–22 is disordered; that stretch reads MKTTRKESLKRRHRRIRRKVSG. The segment covering 8-20 has biased composition (basic residues); that stretch reads SLKRRHRRIRRKV.

The protein belongs to the universal ribosomal protein uL18 family. Part of the 50S ribosomal subunit; part of the 5S rRNA/L5/L18/L25 subcomplex. Contacts the 5S and 23S rRNAs.

Its function is as follows. This is one of the proteins that bind and probably mediate the attachment of the 5S RNA into the large ribosomal subunit, where it forms part of the central protuberance. This is Large ribosomal subunit protein uL18 from Crocosphaera subtropica (strain ATCC 51142 / BH68) (Cyanothece sp. (strain ATCC 51142)).